The following is a 684-amino-acid chain: Probable Xaa-Pro aminopeptidase P (684 aa).

Residues D481, D492, E590, and E604 each coordinate Mn(2+).

Belongs to the peptidase M24B family. The cofactor is Mn(2+).

It catalyses the reaction Release of any N-terminal amino acid, including proline, that is linked to proline, even from a dipeptide or tripeptide.. Catalyzes the removal of a penultimate prolyl residue from the N-termini of peptides. This chain is Probable Xaa-Pro aminopeptidase P (ampp), found in Neurospora crassa (strain ATCC 24698 / 74-OR23-1A / CBS 708.71 / DSM 1257 / FGSC 987).